Here is a 274-residue protein sequence, read N- to C-terminus: 2-dehydro-3-deoxyphosphooctonate aldolase (274 aa).

Belongs to the KdsA family.

It is found in the cytoplasm. The catalysed reaction is D-arabinose 5-phosphate + phosphoenolpyruvate + H2O = 3-deoxy-alpha-D-manno-2-octulosonate-8-phosphate + phosphate. It functions in the pathway carbohydrate biosynthesis; 3-deoxy-D-manno-octulosonate biosynthesis; 3-deoxy-D-manno-octulosonate from D-ribulose 5-phosphate: step 2/3. The protein operates within bacterial outer membrane biogenesis; lipopolysaccharide biosynthesis. This chain is 2-dehydro-3-deoxyphosphooctonate aldolase, found in Rickettsia bellii (strain OSU 85-389).